The sequence spans 605 residues: Tyrosyl-DNA phosphodiesterase 1 (605 aa).

The short motif at 81–86 (RKKVKP) is the Nuclear localization signal element. The active-site Nucleophile is the H236. Residue K238 participates in substrate binding. The interaction with DNA stretch occupies residues 379-382 (SLGS). Residue H466 is the Proton donor/acceptor of the active site. K468 is a substrate binding site.

Belongs to the tyrosyl-DNA phosphodiesterase family. In terms of tissue distribution, ubiquitous, with a low level in roots.

The protein resides in the nucleus. Inhibited by vanadate analogs. Its function is as follows. DNA repair enzyme that can remove a variety of covalent adducts from DNA through hydrolysis of a 3'-phosphodiester bond, giving rise to DNA with a free 3' phosphate. Catalyzes the hydrolysis of dead-end complexes between DNA and the topoisomerase I active site tyrosine residue. This Arabidopsis thaliana (Mouse-ear cress) protein is Tyrosyl-DNA phosphodiesterase 1.